The sequence spans 338 residues: Tetraacyldisaccharide 4'-kinase (338 aa).

Residue 63–70 (TVGGSGKT) coordinates ATP.

Belongs to the LpxK family.

The enzyme catalyses a lipid A disaccharide + ATP = a lipid IVA + ADP + H(+). Its pathway is glycolipid biosynthesis; lipid IV(A) biosynthesis; lipid IV(A) from (3R)-3-hydroxytetradecanoyl-[acyl-carrier-protein] and UDP-N-acetyl-alpha-D-glucosamine: step 6/6. Transfers the gamma-phosphate of ATP to the 4'-position of a tetraacyldisaccharide 1-phosphate intermediate (termed DS-1-P) to form tetraacyldisaccharide 1,4'-bis-phosphate (lipid IVA). The protein is Tetraacyldisaccharide 4'-kinase of Shewanella loihica (strain ATCC BAA-1088 / PV-4).